The following is a 794-amino-acid chain: Ent-kaurene synthase 1, chloroplastic (794 aa).

The N-terminal 28 residues, 1–28 (MSLLLSNSVLVGPKFRSSRISHASASLD), are a transit peptide targeting the chloroplast. Residues aspartate 543, aspartate 547, asparagine 687, and glutamate 695 each contribute to the Mg(2+) site. A DDXXD motif motif is present at residues 543–547 (DDFFD).

The protein belongs to the terpene synthase family. Mg(2+) serves as cofactor. Accumulates in leaves, and, at low levels, in germinating seeds.

It localises to the plastid. Its subcellular location is the chloroplast. The enzyme catalyses ent-copalyl diphosphate = ent-kaur-16-ene + diphosphate. It functions in the pathway secondary metabolite biosynthesis; terpenoid biosynthesis. It participates in plant hormone biosynthesis; gibberellin biosynthesis. In terms of biological role, involved in the biosynthesis of ent-kaurene diterpenoids natural products such as oridonin, miltiradiene, eriocalyxin B and nezukol, known to exhibit antitumor, anti-inflammatory and antibacterial activities, and in the production of gibberellins phytohormones. Catalyzes the conversion of ent-copalyl diphosphate (ent-CPP) to ent-kaurene. The chain is Ent-kaurene synthase 1, chloroplastic from Isodon eriocalyx (Plectranthus eriocalyx).